Here is a 197-residue protein sequence, read N- to C-terminus: Protein GrpE (197 aa).

Residues 1–31 (MSDDTKKQDTAADAEVEKEMEGVPEHLRDDR) show a composition bias toward basic and acidic residues. The interval 1–48 (MSDDTKKQDTAADAEVEKEMEGVPEHLRDDRGSEEDASDDLSAALESL) is disordered.

The protein belongs to the GrpE family. As to quaternary structure, homodimer.

It is found in the cytoplasm. Participates actively in the response to hyperosmotic and heat shock by preventing the aggregation of stress-denatured proteins, in association with DnaK and GrpE. It is the nucleotide exchange factor for DnaK and may function as a thermosensor. Unfolded proteins bind initially to DnaJ; upon interaction with the DnaJ-bound protein, DnaK hydrolyzes its bound ATP, resulting in the formation of a stable complex. GrpE releases ADP from DnaK; ATP binding to DnaK triggers the release of the substrate protein, thus completing the reaction cycle. Several rounds of ATP-dependent interactions between DnaJ, DnaK and GrpE are required for fully efficient folding. This is Protein GrpE from Erythrobacter litoralis (strain HTCC2594).